Consider the following 399-residue polypeptide: PCI domain-containing protein 2 (399 aa).

Residue Ala2 is modified to N-acetylalanine. Residue Ser45 is modified to Phosphoserine. The region spanning 210–391 is the PCI domain; sequence ITYKYYVGRK…QKLVVSKQNP (182 aa).

The protein belongs to the CSN12 family. In terms of assembly, component of the nuclear pore complex (NPC)-associated TREX-2 complex (transcription and export complex 2), composed of at least GANP, 2 copies of ENY2, PCID2, SEM1/DSS1, and either centrin CETN2 or centrin CETN3. The TREX-2 complex also associates with ALYREF/ALY and with the nucleoporin NUP153. Interacts with BRCA2. Interacts with SRCAP chromatin remodeling complex component ZNHIT1; the interaction results in inhibition of SRCAP complex activity, preventing the deposition of histone variant H2AZ1/H2A.Z to lymphoid fate regulator genes and restricting lymphoid lineage commitment. Highly expressed in bone marrow and haematopoietic progenitor cells but is almost undetectable in mature blood cells.

It is found in the cytoplasm. It localises to the nucleus. The protein localises to the nuclear pore complex. Functionally, required for B-cell survival through the regulation of the expression of cell-cycle checkpoint MAD2L1 protein during B cell differentiation. As a component of the TREX-2 complex, involved in the export of mRNAs to the cytoplasm through the nuclear pores. Binds and stabilizes BRCA2 and is thus involved in the control of R-loop-associated DNA damage and transcription-associated genomic instability. Blocks the activity of the SRCAP chromatin remodeling complex by interacting with SRCAP complex member ZNHIT1 and inhibiting its interaction with the complex. This prevents the deposition of histone variant H2AZ1/H2A.Z at the nucleosomes of key lymphoid fate regulator genes which suppresses their expression and restricts lymphoid lineage commitment. The protein is PCI domain-containing protein 2 (Pcid2) of Mus musculus (Mouse).